Here is a 426-residue protein sequence, read N- to C-terminus: MTQMTDAKSGITTEEMKFVAKEEGMDVETLKNLIAKGYVVIPKNVNRNTKPVGIGDNLRTKVNVNLGTSPDFIDIACELKKVEISNKYGADAIMDLSTGGNLPEIRKEIIKNTNLPIGTVPIYEVGVDAKEKYGRVIDMDEDLIFNVIERQAKEGVDFMTLHCGITKQTVSALNNDPRKMGVVSRGGAFLTAYIMYHDKENPLYKEFDYLLELLKEHDVTLSLGDGMRPGCLQDNTDRAQIQELITLGELVDKCREKGVQVMVEGPGHVPYNNIEANMKIQKTLCKNAPFYVLGPIVTDLAPGYDHITAAIGGTLAAVSGANFLCYVTPAEHVRLMKEDDVKEGLIASKIAAQAADVAKGHPVAWKLEKEMADARIKHDWERQFEIALDSNKPRKMREEIPSKDEKACSVCGDYCALLMVEELGKR.

Residues N65, M94, Y123, H162, 184–186, 225–228, and E264 each bind substrate; these read SRG and DGMR. Residue H268 coordinates Zn(2+). Y291 serves as a coordination point for substrate. A Zn(2+)-binding site is contributed by H332. Residues C408, C411, and C415 each coordinate [4Fe-4S] cluster.

This sequence belongs to the ThiC family. It depends on [4Fe-4S] cluster as a cofactor.

It carries out the reaction 5-amino-1-(5-phospho-beta-D-ribosyl)imidazole + S-adenosyl-L-methionine = 4-amino-2-methyl-5-(phosphooxymethyl)pyrimidine + CO + 5'-deoxyadenosine + formate + L-methionine + 3 H(+). Its pathway is cofactor biosynthesis; thiamine diphosphate biosynthesis. Its function is as follows. Catalyzes the synthesis of the hydroxymethylpyrimidine phosphate (HMP-P) moiety of thiamine from aminoimidazole ribotide (AIR) in a radical S-adenosyl-L-methionine (SAM)-dependent reaction. The sequence is that of Phosphomethylpyrimidine synthase from Methanococcus maripaludis (strain DSM 14266 / JCM 13030 / NBRC 101832 / S2 / LL).